The primary structure comprises 133 residues: Small ribosomal subunit protein uS8 (133 aa).

Belongs to the universal ribosomal protein uS8 family. Part of the 30S ribosomal subunit. Contacts proteins S5 and S12.

Functionally, one of the primary rRNA binding proteins, it binds directly to 16S rRNA central domain where it helps coordinate assembly of the platform of the 30S subunit. This chain is Small ribosomal subunit protein uS8, found in Chlorobaculum parvum (strain DSM 263 / NCIMB 8327) (Chlorobium vibrioforme subsp. thiosulfatophilum).